Here is a 91-residue protein sequence, read N- to C-terminus: Early E3B 10.4 kDa protein (91 aa).

Residues Met1–Thr22 form the signal peptide. Residues Ala23–Pro34 lie on the Lumenal side of the membrane. A helical transmembrane segment spans residues Phe35 to Phe60. Topologically, residues Gln61 to Ile91 are cytoplasmic.

The protein belongs to the adenoviridae E3B family.

It localises to the host endoplasmic reticulum membrane. Functionally, down-regulates the EGF receptor. This Homo sapiens (Human) protein is Early E3B 10.4 kDa protein.